We begin with the raw amino-acid sequence, 436 residues long: Glutamyl-tRNA reductase (436 aa).

Substrate is bound by residues T49–R52, S109, E114–Q116, and Q120. The Nucleophile role is filled by C50. G198 to S203 lines the NADP(+) pocket.

This sequence belongs to the glutamyl-tRNA reductase family. As to quaternary structure, homodimer.

The enzyme catalyses (S)-4-amino-5-oxopentanoate + tRNA(Glu) + NADP(+) = L-glutamyl-tRNA(Glu) + NADPH + H(+). Its pathway is porphyrin-containing compound metabolism; protoporphyrin-IX biosynthesis; 5-aminolevulinate from L-glutamyl-tRNA(Glu): step 1/2. It participates in porphyrin-containing compound metabolism; chlorophyll biosynthesis. Its function is as follows. Catalyzes the NADPH-dependent reduction of glutamyl-tRNA(Glu) to glutamate 1-semialdehyde (GSA). This is Glutamyl-tRNA reductase from Prochlorococcus marinus (strain MIT 9303).